Reading from the N-terminus, the 365-residue chain is Caffeic acid 3-O-methyltransferase (365 aa).

Asn-133 is a (E)-ferulate binding site. Residues Gly-210, Asp-233, Asp-253, Met-254, Met-266, and Lys-267 each contribute to the S-adenosyl-L-homocysteine site. His-271 serves as the catalytic Proton acceptor. A (E)-5-hydroxyferulate-binding site is contributed by Asp-272.

It belongs to the class I-like SAM-binding methyltransferase superfamily. Cation-independent O-methyltransferase family. COMT subfamily. As to quaternary structure, homodimer.

The enzyme catalyses (E)-caffeate + S-adenosyl-L-methionine = (E)-ferulate + S-adenosyl-L-homocysteine + H(+). It catalyses the reaction (E)-5-hydroxyferulate + S-adenosyl-L-methionine = (E)-sinapate + S-adenosyl-L-homocysteine + H(+). It participates in aromatic compound metabolism; phenylpropanoid biosynthesis. Inhibited by Cu(2+), and to a lesser extent by Ni(2+), Mn(2+), Co(2+), Fe(3+) and Zn(2+). Unaffected by Fe(2+) and Mg(2+). Functionally, catalyzes the conversion of caffeic acid to ferulic acid and of 5-hydroxyferulic acid to sinapic acid. The resulting products may subsequently be converted to the corresponding alcohols that are incorporated into lignins. The sequence is that of Caffeic acid 3-O-methyltransferase from Ammi majus (Bishop's weed).